A 1911-amino-acid polypeptide reads, in one-letter code: Adenylate kinase 9 (1911 aa).

The adenylate kinase 1 stretch occupies residues 31 to 285 (VCFVVFGKPG…LFMIVMDRLK (255 aa)). ATP is bound at residue 40–45 (GVGKTT). Residues 60–89 (EALPILEEQIAAETESGVMLQSMLISGQSI) form an NMP 1 region. AMP is bound by residues 87–89 (QSI) and 116–119 (EIPS). Residues 160-205 (GQRQHNNTGYIYSRDQWDPEVIENHRKKKKEAQKDGKGEEEEEEEE) are LID 1. Residues 185-210 (RKKKKEAQKDGKGEEEEEEEEQEEEE) are disordered. Residues 197 to 210 (GEEEEEEEEQEEEE) show a composition bias toward acidic residues. Arginine 229 is an AMP binding site. Coiled-coil stretches lie at residues 443-485 (AEAT…EFGV) and 676-711 (LQKKSEIDSKILERLLEELQKKKKEEEEARKATEEE). Disordered stretches follow at residues 728–796 (KAKE…TEIP) and 892–926 (DYEEETEDYQTEAEVDEELEEEEEEEGEDKMKERK). Over residues 733-750 (EETDNEDEEEIEGDELEV) the composition is skewed to acidic residues. Positions 751-761 (HEEPEASHDTR) are enriched in basic and acidic residues. Composition is skewed to acidic residues over residues 767 to 791 (EEFEASEVPETEPEAVSEPIEETTV) and 892 to 919 (DYEEETEDYQTEAEVDEELEEEEEEEGE). Adenylate kinase regions lie at residues 992 to 1203 (LRIC…ELIL) and 1412 to 1601 (IRII…KNVQ). 1001 to 1006 (GSGKTM) contributes to the ATP binding site. Positions 1021-1052 (QFEEVLQEKLLLKTEKKVGPEFEEDSENEQAA) are NMP 2. AMP is bound by residues 1050–1052 (QAA) and 1079–1082 (VQLT). The tract at residues 1124 to 1144 (DGFPRYPEEAQFLGDRGFFPD) is LID 2. 1421 to 1426 (KSGKTT) contributes to the ATP binding site. Positions 1441 to 1472 (SIGGALRYVLNNHPETELALMLNWHLHKGMTA) are NMP 3. AMP is bound by residues arginine 1447, 1470–1472 (MTA), 1499–1502 (GYPV), glutamine 1506, and arginine 1543. The LID 3 stretch occupies residues 1536–1550 (LEKENEQRLPYPLHN).

Belongs to the adenylate kinase family.

The protein resides in the cytoplasm. It is found in the nucleus. Its subcellular location is the cell projection. The protein localises to the cilium. It localises to the flagellum. The enzyme catalyses a ribonucleoside 5'-phosphate + ATP = a ribonucleoside 5'-diphosphate + ADP. It carries out the reaction AMP + ATP = 2 ADP. The catalysed reaction is GTP + AMP = GDP + ADP. It catalyses the reaction CMP + ATP = CDP + ADP. The enzyme catalyses GTP + CMP = CDP + GDP. It carries out the reaction dAMP + ATP = dADP + ADP. The catalysed reaction is dCMP + ATP = dCDP + ADP. It catalyses the reaction a ribonucleoside 5'-diphosphate + ATP = a ribonucleoside 5'-triphosphate + ADP. The enzyme catalyses CDP + ATP = CTP + ADP. It carries out the reaction CDP + GTP = CTP + GDP. The catalysed reaction is GDP + ATP = GTP + ADP. It catalyses the reaction UDP + ATP = UTP + ADP. The enzyme catalyses GTP + UDP = UTP + GDP. It carries out the reaction dTDP + GTP = dTTP + GDP. The catalysed reaction is dCDP + ATP = dCTP + ADP. It catalyses the reaction dCDP + GTP = dCTP + GDP. The enzyme catalyses dGDP + ATP = dGTP + ADP. It carries out the reaction dTDP + ATP = dTTP + ADP. The catalysed reaction is dADP + GTP = dATP + GDP. In terms of biological role, broad-specificity nucleoside phosphate kinase involved in cellular nucleotide homeostasis by catalyzing nucleoside-phosphate interconversions. Similar to other adenylate kinases, preferentially catalyzes the phosphorylation of the nucleoside monophosphate AMP with ATP as phosphate donor to produce ADP. In vitro, can also catalyze the phosphorylation of CMP, dAMP and dCMP and use GTP as an alternate phosphate donor. Moreover, exhibits a diphosphate kinase activity, producing ATP, CTP, GTP, UTP, TTP, dATP, dCTP and dGTP from the corresponding diphosphate substrates with either ATP or GTP as phosphate donors. For this activity shows the following substrate preference CDP &gt; UDP &gt; ADP &gt; TDP. This chain is Adenylate kinase 9, found in Homo sapiens (Human).